The following is a 501-amino-acid chain: Nucleic-acid-binding protein from transposon X-element (501 aa).

2 disordered regions span residues S20–N71 and A105–P128. The CCHC-type zinc-finger motif lies at V285–K302. 2 disordered regions span residues R353–G385 and Q400–S443. Positions Q407–R422 are enriched in low complexity. Residues G434–S443 are compositionally biased toward polar residues.

The protein resides in the virion. In terms of biological role, strongly basic protein that binds directly to retroviral RNA and may be involved in its packaging and in the reverse transcription process. The protein is Nucleic-acid-binding protein from transposon X-element of Drosophila melanogaster (Fruit fly).